We begin with the raw amino-acid sequence, 127 residues long: MPTIQQLIRNEREQARQKTKSPALKQCPQRRGVCTRVYTTTPKKPNSALRKVARVRLTSGFEVTAYIPGIGHNLQEHSVVMIRGGRVKDLPGVRYHIIRGTLDTAGVKDRKQGRSKYGTKRPKEAKK.

The residue at position 89 (Asp89) is a 3-methylthioaspartic acid. Positions 102–127 are disordered; that stretch reads LDTAGVKDRKQGRSKYGTKRPKEAKK. A compositionally biased stretch (basic residues) spans 113-127; that stretch reads GRSKYGTKRPKEAKK.

It belongs to the universal ribosomal protein uS12 family. As to quaternary structure, part of the 30S ribosomal subunit. Contacts proteins S8 and S17. May interact with IF1 in the 30S initiation complex.

Functionally, with S4 and S5 plays an important role in translational accuracy. Its function is as follows. Interacts with and stabilizes bases of the 16S rRNA that are involved in tRNA selection in the A site and with the mRNA backbone. Located at the interface of the 30S and 50S subunits, it traverses the body of the 30S subunit contacting proteins on the other side and probably holding the rRNA structure together. The combined cluster of proteins S8, S12 and S17 appears to hold together the shoulder and platform of the 30S subunit. The chain is Small ribosomal subunit protein uS12 from Nostoc punctiforme (strain ATCC 29133 / PCC 73102).